The sequence spans 106 residues: uncharacterized protein (106 aa).

It is found in the mitochondrion. This is an uncharacterized protein from Arabidopsis thaliana (Mouse-ear cress).